The following is a 368-amino-acid chain: snRNA-activating protein complex subunit 1 (368 aa).

The tract at residues 1 to 168 (MGTPPGLQTD…EEFKDPSDRV (168 aa)) is SNAPC3-binding. Positions 164–268 (PSDRVMKLIT…AESLAKIKSK (105 aa)) are SNAPC4-binding. Disordered regions lie at residues 224-257 (QQWHKDRKNPSLKSKTNDGEEKMEGNSQETERCE) and 275-368 (QASK…RRKH). Residues 238–257 (KTNDGEEKMEGNSQETERCE) show a composition bias toward basic and acidic residues. Phosphoserine occurs at positions 289 and 290.

Part of the SNAPc complex composed of 5 subunits: SNAPC1, SNAPC2, SNAPC3, SNAPC4 and SNAPC5. SNAPC1 interacts with SNAPC3, SNAPC4 and TBP.

The protein resides in the nucleus. Functionally, part of the SNAPc complex required for the transcription of both RNA polymerase II and III small-nuclear RNA genes. Binds to the proximal sequence element (PSE), a non-TATA-box basal promoter element common to these 2 types of genes. Recruits TBP and BRF2 to the U6 snRNA TATA box. In Homo sapiens (Human), this protein is snRNA-activating protein complex subunit 1 (SNAPC1).